The chain runs to 351 residues: sn-glycerol-3-phosphate import ATP-binding protein UgpC (351 aa).

Residues 4-234 (ITLKDLVKSY…PATLFVAGFI (231 aa)) form the ABC transporter domain. Residue 36–43 (GPSGCGKS) coordinates ATP.

The protein belongs to the ABC transporter superfamily. sn-glycerol-3-phosphate importer (TC 3.A.1.1.3) family. As to quaternary structure, the complex is composed of two ATP-binding proteins (UgpC), two transmembrane proteins (UgpA and UgpE) and a solute-binding protein (UgpB).

It is found in the cell inner membrane. The catalysed reaction is sn-glycerol 3-phosphate(out) + ATP + H2O = sn-glycerol 3-phosphate(in) + ADP + phosphate + H(+). Its function is as follows. Part of the ABC transporter complex UgpBAEC involved in sn-glycerol-3-phosphate (G3P) import. Responsible for energy coupling to the transport system. The chain is sn-glycerol-3-phosphate import ATP-binding protein UgpC from Ruegeria sp. (strain TM1040) (Silicibacter sp.).